Here is a 909-residue protein sequence, read N- to C-terminus: Coatomer subunit beta'-3 (909 aa).

WD repeat units follow at residues 13–52 (QRSERVKSVDLHPTEPWILASLYSGTVCIWNYQTQTITKS), 55–94 (VTELPVRSAKFIPRKQWVVAGADDMYIRVYNYNTMDKVKV), 97–136 (AHSDYIRCVAVHPTLPYVLSSSDDMLIKLWDWENGWACTQ), 140–180 (GHSH…PNFT), 183–224 (AHQK…CVQT), 227–266 (GHTHNVSAVCFHPELPIIITGSEDGTVRIWHATTYRLENT), 269–309 (YGLE…ASMD), 351–390 (TCDLYPQSLKHNPNGRFVVVCGDGEYIIYTALAWRNRSFG), and 461–501 (QIDV…SHFD). Residues 862-909 (EENGHVENEGDEEEQQEEEVNEEEGVVDADSTDGAVLVNGSEVLTPHP) form a disordered region. The span at 870–892 (EGDEEEQQEEEVNEEEGVVDADS) shows a compositional bias: acidic residues.

Belongs to the WD repeat COPB2 family. As to quaternary structure, oligomeric complex that consists of at least the alpha, beta, beta', gamma, delta, epsilon and zeta subunits.

Its subcellular location is the cytoplasm. It localises to the golgi apparatus membrane. The protein resides in the cytoplasmic vesicle. It is found in the COPI-coated vesicle membrane. Its function is as follows. The coatomer is a cytosolic protein complex that binds to dilysine motifs and reversibly associates with Golgi non-clathrin-coated vesicles, which further mediate biosynthetic protein transport from the ER, via the Golgi up to the trans Golgi network. Coatomer complex is required for budding from Golgi membranes, and is essential for the retrograde Golgi-to-ER transport of dilysine-tagged proteins. The sequence is that of Coatomer subunit beta'-3 from Arabidopsis thaliana (Mouse-ear cress).